The chain runs to 356 residues: Protein-glutamate methylesterase/protein-glutamine glutaminase (356 aa).

The region spanning 4–121 is the Response regulatory domain; sequence KVLIVDDSAL…QSGMLEYTDL (118 aa). D55 carries the 4-aspartylphosphate modification. The CheB-type methylesterase domain occupies 156–349; that stretch reads PLTSSEKLII…RRVLEFFAAH (194 aa). Active-site residues include S169, H195, and D291.

This sequence belongs to the CheB family. In terms of processing, phosphorylated by CheA. Phosphorylation of the N-terminal regulatory domain activates the methylesterase activity.

It is found in the cytoplasm. The catalysed reaction is [protein]-L-glutamate 5-O-methyl ester + H2O = L-glutamyl-[protein] + methanol + H(+). It catalyses the reaction L-glutaminyl-[protein] + H2O = L-glutamyl-[protein] + NH4(+). Its function is as follows. Involved in chemotaxis. Part of a chemotaxis signal transduction system that modulates chemotaxis in response to various stimuli. Catalyzes the demethylation of specific methylglutamate residues introduced into the chemoreceptors (methyl-accepting chemotaxis proteins or MCP) by CheR. Also mediates the irreversible deamidation of specific glutamine residues to glutamic acid. The sequence is that of Protein-glutamate methylesterase/protein-glutamine glutaminase from Thiobacillus denitrificans (strain ATCC 25259 / T1).